The sequence spans 576 residues: Arginine--tRNA ligase (576 aa).

A 'HIGH' region motif is present at residues 122-132; sequence PNVAKQMHVGH.

This sequence belongs to the class-I aminoacyl-tRNA synthetase family. As to quaternary structure, monomer.

It is found in the cytoplasm. The catalysed reaction is tRNA(Arg) + L-arginine + ATP = L-arginyl-tRNA(Arg) + AMP + diphosphate. In Yersinia pseudotuberculosis serotype O:1b (strain IP 31758), this protein is Arginine--tRNA ligase.